A 291-amino-acid chain; its full sequence is Pantothenate synthetase 1 (291 aa).

The Proton donor role is filled by H37. 147–150 (GEKD) lines the ATP pocket. Q153 is a binding site for (R)-pantoate. Residue 184-187 (ISSR) coordinates ATP.

This sequence belongs to the pantothenate synthetase family. Homodimer.

The protein localises to the cytoplasm. It catalyses the reaction (R)-pantoate + beta-alanine + ATP = (R)-pantothenate + AMP + diphosphate + H(+). It functions in the pathway cofactor biosynthesis; (R)-pantothenate biosynthesis; (R)-pantothenate from (R)-pantoate and beta-alanine: step 1/1. Functionally, catalyzes the condensation of pantoate with beta-alanine in an ATP-dependent reaction via a pantoyl-adenylate intermediate. The polypeptide is Pantothenate synthetase 1 (Frankia alni (strain DSM 45986 / CECT 9034 / ACN14a)).